Here is a 487-residue protein sequence, read N- to C-terminus: Argininosuccinate lyase (487 aa).

The protein belongs to the lyase 1 family. Argininosuccinate lyase subfamily.

It is found in the cytoplasm. It carries out the reaction 2-(N(omega)-L-arginino)succinate = fumarate + L-arginine. Its pathway is amino-acid biosynthesis; L-arginine biosynthesis; L-arginine from L-ornithine and carbamoyl phosphate: step 3/3. This Natranaerobius thermophilus (strain ATCC BAA-1301 / DSM 18059 / JW/NM-WN-LF) protein is Argininosuccinate lyase.